We begin with the raw amino-acid sequence, 410 residues long: Cysteine desulfurase IscS (410 aa).

Residues 80–81, Asn160, Gln188, and 208–210 each bind pyridoxal 5'-phosphate; these read AT and SGH. Lys211 bears the N6-(pyridoxal phosphate)lysine mark. Thr248 is a binding site for pyridoxal 5'-phosphate. Residue Cys334 is the Cysteine persulfide intermediate of the active site. Residue Cys334 participates in [2Fe-2S] cluster binding.

The protein belongs to the class-V pyridoxal-phosphate-dependent aminotransferase family. NifS/IscS subfamily. As to quaternary structure, homodimer. Forms a heterotetramer with IscU, interacts with other sulfur acceptors. It depends on pyridoxal 5'-phosphate as a cofactor.

The protein localises to the cytoplasm. The enzyme catalyses (sulfur carrier)-H + L-cysteine = (sulfur carrier)-SH + L-alanine. It participates in cofactor biosynthesis; iron-sulfur cluster biosynthesis. Its function is as follows. Master enzyme that delivers sulfur to a number of partners involved in Fe-S cluster assembly, tRNA modification or cofactor biosynthesis. Catalyzes the removal of elemental sulfur atoms from cysteine to produce alanine. Functions as a sulfur delivery protein for Fe-S cluster synthesis onto IscU, an Fe-S scaffold assembly protein, as well as other S acceptor proteins. The chain is Cysteine desulfurase IscS from Rickettsia massiliae (strain Mtu5).